The sequence spans 94 residues: MSIKPLGDRVVIKRLEAEETTKSGIIVTGTAKERPQEAEVVAVGPGAIIDGKRTEMEVKIGDKVLYSKYAGTEVKFEGEEYTILRQDDILAIVE.

It belongs to the GroES chaperonin family. In terms of assembly, heptamer of 7 subunits arranged in a ring. Interacts with the chaperonin GroEL.

Its subcellular location is the cytoplasm. Functionally, together with the chaperonin GroEL, plays an essential role in assisting protein folding. The GroEL-GroES system forms a nano-cage that allows encapsulation of the non-native substrate proteins and provides a physical environment optimized to promote and accelerate protein folding. GroES binds to the apical surface of the GroEL ring, thereby capping the opening of the GroEL channel. The chain is Co-chaperonin GroES from Clostridium perfringens (strain SM101 / Type A).